Consider the following 87-residue polypeptide: U3-theraphotoxin-Hhn1p (87 aa).

A signal peptide spans 1-24 (MVNMKASMFLTFAGLVLLFVVCYA). The propeptide occupies 25 to 52 (SESEEKEFPKEMLSSIFAVDNDFKQEER). 3 disulfides stabilise this stretch: Cys54/Cys67, Cys61/Cys72, and Cys66/Cys79.

The protein belongs to the neurotoxin 10 (Hwtx-1) family. 51 (Hntx-8) subfamily. Hntx-8 sub-subfamily. As to expression, expressed by the venom gland.

Its subcellular location is the secreted. Its function is as follows. Ion channel inhibitor. This Cyriopagopus hainanus (Chinese bird spider) protein is U3-theraphotoxin-Hhn1p.